The primary structure comprises 331 residues: DNA-directed RNA polymerase subunit alpha (331 aa).

Residues 1–226 (MLIAQRPTLT…ELFGLCRELN (226 aa)) are alpha N-terminal domain (alpha-NTD). The alpha C-terminal domain (alpha-CTD) stretch occupies residues 243–331 (TNPEMAVPIE…GGTFFSPEDE (89 aa)).

This sequence belongs to the RNA polymerase alpha chain family. Homodimer. The RNAP catalytic core consists of 2 alpha, 1 beta, 1 beta' and 1 omega subunit. When a sigma factor is associated with the core the holoenzyme is formed, which can initiate transcription.

It catalyses the reaction RNA(n) + a ribonucleoside 5'-triphosphate = RNA(n+1) + diphosphate. DNA-dependent RNA polymerase catalyzes the transcription of DNA into RNA using the four ribonucleoside triphosphates as substrates. The polypeptide is DNA-directed RNA polymerase subunit alpha (Bifidobacterium longum (strain NCC 2705)).